Consider the following 161-residue polypeptide: Vasotocin-neurophysin VT (161 aa).

Residues 1–22 form the signal peptide; that stretch reads MSAMGWTLLAAALLAISAQSNG. Cys-23 and Cys-28 are joined by a disulfide. Gly-31 is subject to Glycine amide. 7 cysteine pairs are disulfide-bonded: Cys-43/Cys-91, Cys-46/Cys-58, Cys-52/Cys-81, Cys-59/Cys-71, Cys-99/Cys-111, Cys-105/Cys-123, and Cys-112/Cys-117.

Belongs to the vasopressin/oxytocin family.

The protein localises to the secreted. Vasotocin is an antidiuretic hormone. This chain is Vasotocin-neurophysin VT, found in Eptatretus stoutii (Pacific hagfish).